The primary structure comprises 345 residues: Heat-inducible transcription repressor HrcA (345 aa).

It belongs to the HrcA family.

Its function is as follows. Negative regulator of class I heat shock genes (grpE-dnaK-dnaJ and groELS operons). Prevents heat-shock induction of these operons. This Corynebacterium diphtheriae (strain ATCC 700971 / NCTC 13129 / Biotype gravis) protein is Heat-inducible transcription repressor HrcA.